A 299-amino-acid polypeptide reads, in one-letter code: MIKHFINLDDLPNHDLTQIIKQAIALKKQYKSGKINKILEHKTLAMIFDKSSTRTRVSFEAGMTQLGGHALFLSDKDIQLGRGEPIIDSAIVISSMVDVIMMRISSHKDIHTFAENSSVPIINALSDESHPCQLLSDMMTYQEHNGSIANKTIAWIGDGNNMCHTYMQAAKSFNFKLNIATPKNYQPDQDFIEKYANHIHLFTDAQKACQKVDLVVTDVWASMGQEAEQTKRKITFKDFSVNAALMSKAKPSAVFMHCLPAHRGEEVSTNVIDGSQSLVWLEAENRLHVQKALLLYLLN.

Residues 52 to 55 (STRT), glutamine 79, arginine 103, and 130 to 133 (HPCQ) contribute to the carbamoyl phosphate site. Residues asparagine 161, aspartate 218, and 222 to 223 (SM) contribute to the L-ornithine site. Residues 258–259 (CL) and arginine 286 each bind carbamoyl phosphate.

This sequence belongs to the aspartate/ornithine carbamoyltransferase superfamily. OTCase family.

The protein localises to the cytoplasm. It carries out the reaction carbamoyl phosphate + L-ornithine = L-citrulline + phosphate + H(+). It participates in amino-acid biosynthesis; L-arginine biosynthesis; L-arginine from L-ornithine and carbamoyl phosphate: step 1/3. Its function is as follows. Reversibly catalyzes the transfer of the carbamoyl group from carbamoyl phosphate (CP) to the N(epsilon) atom of ornithine (ORN) to produce L-citrulline. This chain is Ornithine carbamoyltransferase, found in Ruthia magnifica subsp. Calyptogena magnifica.